The chain runs to 159 residues: UPF0262 protein RD1_1069 (159 aa).

It belongs to the UPF0262 family.

The sequence is that of UPF0262 protein RD1_1069 from Roseobacter denitrificans (strain ATCC 33942 / OCh 114) (Erythrobacter sp. (strain OCh 114)).